Consider the following 251-residue polypeptide: 5-oxoprolinase subunit A (251 aa).

Belongs to the LamB/PxpA family. Forms a complex composed of PxpA, PxpB and PxpC.

The catalysed reaction is 5-oxo-L-proline + ATP + 2 H2O = L-glutamate + ADP + phosphate + H(+). Functionally, catalyzes the cleavage of 5-oxoproline to form L-glutamate coupled to the hydrolysis of ATP to ADP and inorganic phosphate. In Vibrio parahaemolyticus serotype O3:K6 (strain RIMD 2210633), this protein is 5-oxoprolinase subunit A.